Here is a 92-residue protein sequence, read N- to C-terminus: Small ribosomal subunit protein uS19c (92 aa).

The protein belongs to the universal ribosomal protein uS19 family.

Its subcellular location is the plastid. It is found in the chloroplast. Its function is as follows. Protein S19 forms a complex with S13 that binds strongly to the 16S ribosomal RNA. This chain is Small ribosomal subunit protein uS19c, found in Nephroselmis olivacea (Green alga).